The sequence spans 79 residues: Raniseptin-3 (79 aa).

The N-terminal stretch at 1–22 (MAFLKKSLFLVLFLGIVSLSIC) is a signal peptide. The propeptide occupies 23 to 49 (EEEKREGEEEEKQEEENEELSEEELRE).

Belongs to the frog skin active peptide (FSAP) family. Dermaseptin subfamily. Expressed by the skin glands.

It is found in the secreted. Its function is as follows. Has antibacterial activity. This is Raniseptin-3 from Boana raniceps (Chaco tree frog).